The chain runs to 198 residues: Probable GTP-binding protein EngB (198 aa).

Residues 21–195 (NFSEVAFLGR…EDIIINQTLG (175 aa)) form the EngB-type G domain. GTP contacts are provided by residues 29-36 (GRSNVGKS), 56-60 (GKTQL), 81-84 (DLPG), 151-154 (TKCD), and 174-176 (VSN). Residues Ser-36 and Thr-58 each contribute to the Mg(2+) site.

The protein belongs to the TRAFAC class TrmE-Era-EngA-EngB-Septin-like GTPase superfamily. EngB GTPase family. Mg(2+) serves as cofactor.

Functionally, necessary for normal cell division and for the maintenance of normal septation. The polypeptide is Probable GTP-binding protein EngB (Campylobacter jejuni subsp. jejuni serotype O:2 (strain ATCC 700819 / NCTC 11168)).